The following is a 117-amino-acid chain: NADH-ubiquinone oxidoreductase chain 3 (117 aa).

Transmembrane regions (helical) follow at residues M1–V21, F56–Y76, and T86–Y106.

The protein belongs to the complex I subunit 3 family.

It is found in the mitochondrion membrane. The catalysed reaction is a ubiquinone + NADH + 5 H(+)(in) = a ubiquinol + NAD(+) + 4 H(+)(out). In terms of biological role, core subunit of the mitochondrial membrane respiratory chain NADH dehydrogenase (Complex I) that is believed to belong to the minimal assembly required for catalysis. Complex I functions in the transfer of electrons from NADH to the respiratory chain. The immediate electron acceptor for the enzyme is believed to be ubiquinone. The chain is NADH-ubiquinone oxidoreductase chain 3 (ND3) from Branchiostoma lanceolatum (Common lancelet).